The following is a 435-amino-acid chain: 3-phosphoshikimate 1-carboxyvinyltransferase (435 aa).

3 residues coordinate 3-phosphoshikimate: Lys28, Ser29, and Arg33. Lys28 provides a ligand contact to phosphoenolpyruvate. Phosphoenolpyruvate is bound by residues Gly100 and Arg128. 3-phosphoshikimate contacts are provided by Ser173, Gln175, Asp321, and Lys348. Residue Gln175 coordinates phosphoenolpyruvate. Asp321 acts as the Proton acceptor in catalysis. Residues Arg352 and Arg394 each contribute to the phosphoenolpyruvate site.

It belongs to the EPSP synthase family. In terms of assembly, monomer.

It localises to the cytoplasm. It carries out the reaction 3-phosphoshikimate + phosphoenolpyruvate = 5-O-(1-carboxyvinyl)-3-phosphoshikimate + phosphate. It functions in the pathway metabolic intermediate biosynthesis; chorismate biosynthesis; chorismate from D-erythrose 4-phosphate and phosphoenolpyruvate: step 6/7. Its function is as follows. Catalyzes the transfer of the enolpyruvyl moiety of phosphoenolpyruvate (PEP) to the 5-hydroxyl of shikimate-3-phosphate (S3P) to produce enolpyruvyl shikimate-3-phosphate and inorganic phosphate. The protein is 3-phosphoshikimate 1-carboxyvinyltransferase of Desulfitobacterium hafniense (strain DSM 10664 / DCB-2).